A 392-amino-acid polypeptide reads, in one-letter code: Basic salivary proline-rich protein 1 (392 aa).

The first 16 residues, 1 to 16, serve as a signal peptide directing secretion; that stretch reads MLLILLSVALLALSSA. Q17 carries the post-translational modification Pyrrolidone carboxylic acid. Residues 19–28 are compositionally biased toward polar residues; the sequence is LNEDVSQEES. The interval 19–392 is disordered; it reads LNEDVSQEES…QGGRPSRPPQ (374 aa). Low complexity predominate over residues 34–47; it reads GNPQGPSPQGGNKP. S40 is subject to Phosphoserine; alternate. O-linked (Hex) serine; alternate glycosylation occurs at S40. Residues 48 to 83 show a composition bias toward pro residues; the sequence is QGPPPPPGKPQGPPPQGGNKPQGPPPPGKPQGPPPQ. 15 consecutive repeat copies span residues 53–72, 73–92, 93–112, 114–133, 134–153, 154–173, 175–194, 195–214, 215–234, 236–255, 256–275, 276–295, 297–316, 317–336, and 338–357. The tract at residues 53–357 is 15 X 20 AA approximate tandem repeats of P-P-G-K-P-Q-G-P-P-[PAQ]-Q-[GE]-[GD]-[NKS]-[KSQRN]-[PRQS]-[QS] [GPS]-[PQAR]-[PSR]; that stretch reads PPGKPQGPPP…QEGNNPQGPP (305 aa). O-linked (HexNAc...) serine glycosylation is present at S87. Residues 91–144 show a composition bias toward pro residues; sequence RSPPGKPQGPPPQGGNQPQGPPPPPGKPQGPPPQGGNKPQGPPPPGKPQGPPPQ. A Phosphoserine modification is found at S92. A Phosphoserine; alternate modification is found at S150. The O-linked (Hex) serine; alternate glycan is linked to S150. Composition is skewed to pro residues over residues 152–205, 213–243, 252–266, and 274–324; these read RSPP…PPPQ, RSPP…PQGP, QGPP…PPPQ, and QSPP…PQGP. A compositionally biased stretch (low complexity) spans 325–334; sequence PAQGGSKSQS. Residue S330 is glycosylated (O-linked (HexNAc...) serine). Positions 354–392 are enriched in pro residues; it reads QGPPPPAGGNPQQPQAPPAGQPQGPPRPPQGGRPSRPPQ.

O-glycosylated. O-glycosylation on Ser-87 is prevalent in head and neck cancer patients. O-Glycosylation on Ser-330 has a 5 times prevalence in head and neck cancers. Post-translationally, proteolytically cleaved at the tripeptide Xaa-Pro-Gln, where Xaa in the P(3) position is mostly lysine. The endoprotease may be of microbial origin. In terms of processing, pyroglutamate formation occurs on terminal Gln residues of cleaved peptides. Besides on the N-terminal of mature PBR1, pyroglutamate formation found on at least Gln-58.

Its subcellular location is the secreted. In Homo sapiens (Human), this protein is Basic salivary proline-rich protein 1 (PRB1).